The chain runs to 274 residues: F-box protein SKIP5 (274 aa).

In terms of domain architecture, F-box spans 32–79 (LTSLNNLDDGCLMHILSFLSPIPDRYNTALVCHRWRYLACHPRLWLRV).

As to quaternary structure, part of a SCF (SKP1-cullin-F-box) protein ligase complex. Interacts with SKP1A/ASK1.

The protein operates within protein modification; protein ubiquitination. This is F-box protein SKIP5 (SKIP5) from Arabidopsis thaliana (Mouse-ear cress).